The sequence spans 231 residues: Octanoyl-[acyl-carrier-protein]:protein N-octanoyltransferase LIPT2, mitochondrial (231 aa).

One can recognise a BPL/LPL catalytic domain in the interval 41–224; the sequence is GTKAGVLLVC…AFKETFKCTL (184 aa). Position 43 is an N6-succinyllysine (lysine 43). Substrate contacts are provided by residues 85-92, 154-156, and 167-169; these read RGGLATFH, AIG, and GLA. The active-site Acyl-thioester intermediate is cysteine 185.

It belongs to the LipB family.

It localises to the mitochondrion. It carries out the reaction octanoyl-[ACP] + L-lysyl-[protein] = N(6)-octanoyl-L-lysyl-[protein] + holo-[ACP] + H(+). Its pathway is protein modification; protein lipoylation via endogenous pathway; protein N(6)-(lipoyl)lysine from octanoyl-[acyl-carrier-protein]: step 1/2. Its function is as follows. Catalyzes the transfer of endogenously produced octanoic acid from octanoyl-acyl-carrier-protein onto the lipoyl domains of lipoate-dependent enzymes such as the protein H of the glycine cleavage system (GCSH). Lipoyl-ACP can also act as a substrate although octanoyl-ACP is likely to be the physiological substrate. The chain is Octanoyl-[acyl-carrier-protein]:protein N-octanoyltransferase LIPT2, mitochondrial from Mus musculus (Mouse).